A 185-amino-acid polypeptide reads, in one-letter code: Protein GrpE (185 aa).

A compositionally biased stretch (basic and acidic residues) spans 1–12 (MADEQLNEKDLN). The tract at residues 1 to 22 (MADEQLNEKDLNVEETGAGNAA) is disordered.

Belongs to the GrpE family. As to quaternary structure, homodimer.

The protein localises to the cytoplasm. In terms of biological role, participates actively in the response to hyperosmotic and heat shock by preventing the aggregation of stress-denatured proteins, in association with DnaK and GrpE. It is the nucleotide exchange factor for DnaK and may function as a thermosensor. Unfolded proteins bind initially to DnaJ; upon interaction with the DnaJ-bound protein, DnaK hydrolyzes its bound ATP, resulting in the formation of a stable complex. GrpE releases ADP from DnaK; ATP binding to DnaK triggers the release of the substrate protein, thus completing the reaction cycle. Several rounds of ATP-dependent interactions between DnaJ, DnaK and GrpE are required for fully efficient folding. The chain is Protein GrpE from Pseudomonas putida (strain ATCC 700007 / DSM 6899 / JCM 31910 / BCRC 17059 / LMG 24140 / F1).